Reading from the N-terminus, the 355-residue chain is Serine endoprotease DegS (355 aa).

Over 1–4 the chain is Cytoplasmic; sequence MFVK. The helical transmembrane segment at 5 to 27 threads the bilayer; sequence LLRSVAIGLIVGAILLVAMPSLR. At 28 to 355 the chain is on the periplasmic side; that stretch reads SLNPLSTPQF…VTIQEYPATN (328 aa). Catalysis depends on charge relay system residues His-96 and Asp-126. A substrate-binding site is contributed by Thr-184. Ser-201 acts as the Charge relay system in catalysis. 259–264 contributes to the substrate binding site; that stretch reads IGIGGR. Residues 281-326 form the PDZ domain; it reads GIVVNEVSPDGPAANAGIQVNDLIISVDNKPAISALETMDQVAEIR. Tyr-351 lines the substrate pocket.

This sequence belongs to the peptidase S1C family. In terms of assembly, homotrimer.

The protein localises to the cell inner membrane. It carries out the reaction Acts on substrates that are at least partially unfolded. The cleavage site P1 residue is normally between a pair of hydrophobic residues, such as Val-|-Val.. Allosterically activated by the C-terminus of exposed OMP peptides (consensus Tyr-X-Phe-COOH); cleavage only occurs in the presence of peptides. Inhibited when RseB is bound to RseA. In terms of biological role, a site-1 protease (S1P) that cleaves the peptide bond between 'Val-148' and 'Ser-149' in RseA. Part of a regulated intramembrane proteolysis (RIP) cascade. When heat shock or other environmental stresses disrupt protein folding in the periplasm, DegS senses the accumulation of unassembled outer membrane porins (OMP) and then initiates RseA (anti sigma-E factor) degradation by cleaving its periplasmic domain, making it a substrate for subsequent cleavage by RseP. This cascade ultimately leads to the sigma-E-driven expression of a variety of factors dealing with folding stress in the periplasm and OMP assembly. Required for basal and stress-induced degradation of RseA. In Escherichia coli O157:H7, this protein is Serine endoprotease DegS (degS).